We begin with the raw amino-acid sequence, 173 residues long: Photosystem I assembly protein Ycf3 (173 aa).

TPR repeat units lie at residues 35 to 68, 72 to 105, and 120 to 153; these read AYVYYRDGLSAQNAGDYAEALENYEESLKLEESP, SETLKNMAIIYMSNGDEDLALDTYQRALDQNSNQ, and GRTAQEAGLQDEADRLFDRAADVWTQAVRLYPGG.

The protein belongs to the Ycf3 family.

Its subcellular location is the cellular thylakoid membrane. Essential for the assembly of the photosystem I (PSI) complex. May act as a chaperone-like factor to guide the assembly of the PSI subunits. This Prochlorococcus marinus (strain MIT 9313) protein is Photosystem I assembly protein Ycf3.